The chain runs to 246 residues: tRNA (guanine-N(1)-)-methyltransferase (246 aa).

Residues Gly-113 and 133–138 each bind S-adenosyl-L-methionine; that span reads IGDYVL.

This sequence belongs to the RNA methyltransferase TrmD family. As to quaternary structure, homodimer.

It is found in the cytoplasm. It carries out the reaction guanosine(37) in tRNA + S-adenosyl-L-methionine = N(1)-methylguanosine(37) in tRNA + S-adenosyl-L-homocysteine + H(+). Functionally, specifically methylates guanosine-37 in various tRNAs. The chain is tRNA (guanine-N(1)-)-methyltransferase from Yersinia enterocolitica serotype O:8 / biotype 1B (strain NCTC 13174 / 8081).